Consider the following 318-residue polypeptide: uncharacterized protein (318 aa).

A coiled-coil region spans residues 67-157; the sequence is LAFDELEKEK…SLKAIQTSQE (91 aa). Residues 172–318 are disordered; that stretch reads ESTNKVEKNA…KGFFARLFNL (147 aa). 2 stretches are compositionally biased toward basic and acidic residues: residues 175 to 193 and 219 to 236; these read NKVE…KDSK and KVDK…EKAS. Residues 237–248 are compositionally biased toward polar residues; sequence VEQSKNENAAET. Basic and acidic residues-rich tracts occupy residues 249–274 and 300–310; these read SNKE…HAEA and SEPKPQEEKKG.

This is an uncharacterized protein from Staphylococcus aureus (strain Mu50 / ATCC 700699).